The primary structure comprises 301 residues: N-acetylmuramic acid 6-phosphate etherase (301 aa).

Positions 57–220 constitute an SIS domain; sequence ITEAFKKGGR…TTGAMIRSGK (164 aa). Catalysis depends on Glu85, which acts as the Proton donor. Glu116 is an active-site residue.

It belongs to the GCKR-like family. MurNAc-6-P etherase subfamily. In terms of assembly, homodimer.

It catalyses the reaction N-acetyl-D-muramate 6-phosphate + H2O = N-acetyl-D-glucosamine 6-phosphate + (R)-lactate. It functions in the pathway amino-sugar metabolism; 1,6-anhydro-N-acetylmuramate degradation. The protein operates within amino-sugar metabolism; N-acetylmuramate degradation. Its pathway is cell wall biogenesis; peptidoglycan recycling. Functionally, specifically catalyzes the cleavage of the D-lactyl ether substituent of MurNAc 6-phosphate, producing GlcNAc 6-phosphate and D-lactate. Together with AnmK, is also required for the utilization of anhydro-N-acetylmuramic acid (anhMurNAc) either imported from the medium or derived from its own cell wall murein, and thus plays a role in cell wall recycling. This is N-acetylmuramic acid 6-phosphate etherase from Photobacterium profundum (strain SS9).